We begin with the raw amino-acid sequence, 614 residues long: uncharacterized protein (614 aa).

The segment at 23-68 is disordered; sequence YPIPSHNGDGESEKNSSDSTSSKVNAKVTSSLQGAPSTNDENSVSP. Polar residues predominate over residues 49–68; that stretch reads KVTSSLQGAPSTNDENSVSP.

This sequence to C.trachomatis CT875.

This is an uncharacterized protein from Chlamydia muridarum (strain MoPn / Nigg).